A 792-amino-acid chain; its full sequence is DNA ligase (792 aa).

NAD(+) is bound by residues 42-46 (DAEYD), 91-92 (SL), and Glu124. The active-site N6-AMP-lysine intermediate is the Lys126. NAD(+) is bound by residues Arg147, Glu189, Lys306, and Lys330. Residues Cys424, Cys426, Cys448, and Cys454 each contribute to the Zn(2+) site. The region spanning 714–792 (KTDTAVAGKT…EDEWLAMVGG (79 aa)) is the BRCT domain.

This sequence belongs to the NAD-dependent DNA ligase family. LigA subfamily. It depends on Mg(2+) as a cofactor. Mn(2+) is required as a cofactor.

The catalysed reaction is NAD(+) + (deoxyribonucleotide)n-3'-hydroxyl + 5'-phospho-(deoxyribonucleotide)m = (deoxyribonucleotide)n+m + AMP + beta-nicotinamide D-nucleotide.. Its function is as follows. DNA ligase that catalyzes the formation of phosphodiester linkages between 5'-phosphoryl and 3'-hydroxyl groups in double-stranded DNA using NAD as a coenzyme and as the energy source for the reaction. It is essential for DNA replication and repair of damaged DNA. In Caulobacter sp. (strain K31), this protein is DNA ligase.